The sequence spans 109 residues: Period circadian protein (109 aa).

Residues 29–100 form a disordered region; it reads ITAPVDVDPH…TGTSSGSVQL (72 aa). The span at 69–97 shows a compositional bias: low complexity; it reads SGNFNSGSNLHIGSITNTSNTGTGTSSGS.

Forms a heterodimer with timeless (TIM); the complex then translocates into the nucleus. In terms of processing, phosphorylated with a circadian rhythmicity, probably by the double-time protein (dbt). Phosphorylation could be implicated in the stability of per monomer and in the formation of heterodimer per-tim.

The protein resides in the nucleus. It is found in the cytoplasm. The protein localises to the perinuclear region. Functionally, essential for biological clock functions. Determines the period length of circadian and ultradian rhythms; an increase in PER dosage leads to shortened circadian rhythms and a decrease leads to lengthened circadian rhythms. Essential for the circadian rhythmicity of locomotor activity, eclosion behavior, and for the rhythmic component of the male courtship song that originates in the thoracic nervous system. The biological cycle depends on the rhythmic formation and nuclear localization of the TIM-PER complex. Light induces the degradation of TIM, which promotes elimination of PER. Nuclear activity of the heterodimer coordinatively regulates PER and TIM transcription through a negative feedback loop. Behaves as a negative element in circadian transcriptional loop. Does not appear to bind DNA, suggesting indirect transcriptional inhibition. In Loxocera albiseta (Rust fly), this protein is Period circadian protein (per).